The primary structure comprises 62 residues: Large ribosomal subunit protein bL28 (62 aa).

The protein belongs to the bacterial ribosomal protein bL28 family.

The sequence is that of Large ribosomal subunit protein bL28 from Aliarcobacter butzleri (strain RM4018) (Arcobacter butzleri).